Here is a 436-residue protein sequence, read N- to C-terminus: GTPase Der (436 aa).

EngA-type G domains follow at residues 4 to 167 and 175 to 351; these read PTVA…PVEE and IRFS…ESQN. Residues 10–17, 57–61, 119–122, 181–188, 229–233, and 294–297 each bind GTP; these read GRPNVGKS, DTGGI, NKVD, DTAGM, and NKWD. The region spanning 352–436 is the KH-like domain; that stretch reads KRIPSAVLND…PIHLIARKRK (85 aa).

This sequence belongs to the TRAFAC class TrmE-Era-EngA-EngB-Septin-like GTPase superfamily. EngA (Der) GTPase family. In terms of assembly, associates with the 50S ribosomal subunit.

GTPase that plays an essential role in the late steps of ribosome biogenesis. This chain is GTPase Der, found in Streptococcus pyogenes serotype M3 (strain ATCC BAA-595 / MGAS315).